A 270-amino-acid polypeptide reads, in one-letter code: 4-hydroxy-tetrahydrodipicolinate reductase (270 aa).

NAD(+) contacts are provided by residues 11 to 16 and glutamate 37; that span reads GAGGRM. Arginine 38 is an NADP(+) binding site. NAD(+) is bound by residues 101-103 and 125-128; these read GTT and APNM. The active-site Proton donor/acceptor is histidine 158. Residue histidine 159 participates in (S)-2,3,4,5-tetrahydrodipicolinate binding. Catalysis depends on lysine 162, which acts as the Proton donor. 168–169 contributes to the (S)-2,3,4,5-tetrahydrodipicolinate binding site; the sequence is GT.

Belongs to the DapB family.

Its subcellular location is the cytoplasm. The enzyme catalyses (S)-2,3,4,5-tetrahydrodipicolinate + NAD(+) + H2O = (2S,4S)-4-hydroxy-2,3,4,5-tetrahydrodipicolinate + NADH + H(+). The catalysed reaction is (S)-2,3,4,5-tetrahydrodipicolinate + NADP(+) + H2O = (2S,4S)-4-hydroxy-2,3,4,5-tetrahydrodipicolinate + NADPH + H(+). Its pathway is amino-acid biosynthesis; L-lysine biosynthesis via DAP pathway; (S)-tetrahydrodipicolinate from L-aspartate: step 4/4. Its function is as follows. Catalyzes the conversion of 4-hydroxy-tetrahydrodipicolinate (HTPA) to tetrahydrodipicolinate. In Shewanella putrefaciens (strain CN-32 / ATCC BAA-453), this protein is 4-hydroxy-tetrahydrodipicolinate reductase.